The chain runs to 380 residues: N-acetylneuraminate epimerase (380 aa).

The first 21 residues, 1–21, serve as a signal peptide directing secretion; it reads MKFTKTALFTVLAATAFAAQA. Kelch repeat units lie at residues 42–86, 88–140, 142–176, 177–222, 225–274, 296–349, and 351–380; these read TVYV…AGVN, KLYV…AADG, KIYF…AIFD, PYFN…AIKD, LLVV…IAGG, ANYE…SYNN, and VLLI…LTVE. Residue glutamate 231 is the Proton acceptor of the active site.

The protein belongs to the NanM family. In terms of assembly, homodimer.

It is found in the periplasm. The enzyme catalyses N-acetyl-alpha-neuraminate = N-acetyl-beta-neuraminate. Its function is as follows. Converts alpha-N-acetylneuranimic acid (Neu5Ac) to the beta-anomer, accelerating the equilibrium between the alpha- and beta-anomers. Probably facilitates sialidase-negative bacteria to compete successfully for limited amounts of extracellular Neu5Ac, which is likely taken up in the beta-anomer. In addition, the rapid removal of sialic acid from solution might be advantageous to the bacterium to damp down host responses. This Pasteurella multocida (strain Pm70) protein is N-acetylneuraminate epimerase.